Reading from the N-terminus, the 1179-residue chain is Pesticidal crystal protein Cry1Ad (1179 aa).

It belongs to the delta endotoxin family.

Functionally, promotes colloidosmotic lysis by binding to the midgut epithelial cells of many lepidopteran larvae. The protein is Pesticidal crystal protein Cry1Ad (cry1Ad) of Bacillus thuringiensis subsp. aizawai.